We begin with the raw amino-acid sequence, 182 residues long: Dual-action ribosomal maturation protein DarP (182 aa).

Positions 1–25 (MEENLADNSEREARPSKTKRKKEMH) are disordered.

This sequence belongs to the DarP family.

The protein resides in the cytoplasm. Functionally, member of a network of 50S ribosomal subunit biogenesis factors which assembles along the 30S-50S interface, preventing incorrect 23S rRNA structures from forming. Promotes peptidyl transferase center (PTC) maturation. The protein is Dual-action ribosomal maturation protein DarP of Nitrosospira multiformis (strain ATCC 25196 / NCIMB 11849 / C 71).